The sequence spans 258 residues: uncharacterized protein (258 aa).

Positions 1-19 are cleaved as a signal peptide; sequence MRKIFLPLLLVALSPVAHS.

This is an uncharacterized protein from Escherichia coli (strain K12).